The following is a 100-amino-acid chain: Small ribosomal subunit protein uS14c (100 aa).

The protein belongs to the universal ribosomal protein uS14 family. In terms of assembly, part of the 30S ribosomal subunit.

It is found in the plastid. The protein localises to the chloroplast. In terms of biological role, binds 16S rRNA, required for the assembly of 30S particles. The protein is Small ribosomal subunit protein uS14c of Amborella trichopoda.